The chain runs to 126 residues: Aspartate 1-decarboxylase (126 aa).

Catalysis depends on Ser25, which acts as the Schiff-base intermediate with substrate; via pyruvic acid. Ser25 is subject to Pyruvic acid (Ser). Thr57 provides a ligand contact to substrate. Tyr58 acts as the Proton donor in catalysis. 73-75 contacts substrate; that stretch reads GAA.

This sequence belongs to the PanD family. In terms of assembly, heterooctamer of four alpha and four beta subunits. The cofactor is pyruvate. Is synthesized initially as an inactive proenzyme, which is activated by self-cleavage at a specific serine bond to produce a beta-subunit with a hydroxyl group at its C-terminus and an alpha-subunit with a pyruvoyl group at its N-terminus.

The protein localises to the cytoplasm. It catalyses the reaction L-aspartate + H(+) = beta-alanine + CO2. It functions in the pathway cofactor biosynthesis; (R)-pantothenate biosynthesis; beta-alanine from L-aspartate: step 1/1. Catalyzes the pyruvoyl-dependent decarboxylation of aspartate to produce beta-alanine. This Sodalis glossinidius (strain morsitans) protein is Aspartate 1-decarboxylase.